The primary structure comprises 315 residues: T-box transcription factor tbx-8 (315 aa).

The segment at residues 11–195 (EDQDKLWNLF…FNPFAKGFRE (185 aa)) is a DNA-binding region (T-box). Basic and acidic residues predominate over residues 193–203 (FREGSQSDRKR). Disordered regions lie at residues 193–235 (FREG…SVSP) and 293–315 (PPPSLKNVKKEEQEDIEQEINVV). Over residues 205 to 225 (SPSADDSTTDESSSQVSSPQP) the composition is skewed to low complexity. A compositionally biased stretch (acidic residues) spans 305 to 315 (QEDIEQEINVV).

It localises to the nucleus. In terms of biological role, transcription factor. Involved in the control of early morphogenesis of the intestine, hypodermis and body-wall muscle. Involved in regulating expression of vab-7. Appears to have partially redundant function to tbx-9. This Caenorhabditis elegans protein is T-box transcription factor tbx-8 (tbx-8).